The sequence spans 859 residues: ATP-dependent RNA helicase DDX24 (859 aa).

At K17 the chain carries N6-acetyllysine. S60 carries the phosphoserine modification. Residues P61–K175 form a disordered region. N6-acetyllysine is present on K71. Residues S82 and S94 each carry the phosphoserine modification. The segment covering S82–E91 has biased composition (acidic residues). The span at P95–K105 shows a compositional bias: basic residues. A compositionally biased stretch (polar residues) spans N106–Q115. The Q motif motif lies at S192–V220. The region spanning A224–K528 is the Helicase ATP-binding domain. A237 to T244 serves as a coordination point for ATP. The segment at N262–D374 is disordered. Over residues T277 to A293 the composition is skewed to basic and acidic residues. Phosphoserine occurs at positions 287 and 295. Over residues E294–I304 the composition is skewed to acidic residues. T302 bears the Phosphothreonine mark. K370 participates in a covalent cross-link: Glycyl lysine isopeptide (Lys-Gly) (interchain with G-Cter in SUMO2). Positions D471 to D474 match the DEAD box motif. The region spanning Y578 to D723 is the Helicase C-terminal domain. Glycyl lysine isopeptide (Lys-Gly) (interchain with G-Cter in SUMO2) cross-links involve residues K624, K808, and K825. 2 stretches are compositionally biased toward polar residues: residues P799 to G814 and P823 to S834. The tract at residues P799–N859 is disordered.

It belongs to the DEAD box helicase family. DDX24/MAK5 subfamily. Interacts with FADD. Interacts with RIPK1; this interaction disrupts RLR signaling activation of IFN-dependent transcription factor IRF7. Interacts with NIP7. Interacts with EP300; this interaction prevents TP53 acetylation mediated by EP300. Post-translationally, ubiquitinated by MDM2 without targeting DDX24 for proteasomal degradation. Instead, polyubiquitylated DDX24 promotes interaction with NIP7, a component of pre-rRNP processing complex, and associates with pre-rRNA molecules and pre-ribosomal particles.

It localises to the cytoplasm. Its subcellular location is the nucleus. The catalysed reaction is ATP + H2O = ADP + phosphate + H(+). In terms of biological role, ATP-dependent RNA helicase that plays a role in various aspects of RNA metabolism including pre-mRNA splicing and is thereby involved in different biological processes such as cell cycle regulation or innate immunity. Plays an inhibitory role in TP53 transcriptional activity and subsequently in TP53 controlled cell growth arrest and senescence by inhibiting its EP300 mediated acetylation. Negatively regulates cytosolic RNA-mediated innate immune signaling at least in part by affecting RIPK1/IRF7 interactions. Alternatively, possesses antiviral activity by recognizing gammaherpesvirus transcripts in the context of lytic reactivation. Plays an essential role in cell cycle regulation in vascular smooth muscle cells by interacting with and regulating FANCA (Fanconi anemia complementation group A) mRNA. The protein is ATP-dependent RNA helicase DDX24 (DDX24) of Pongo abelii (Sumatran orangutan).